The primary structure comprises 352 residues: MKLILNKEGAVEFYIPDPQTYRSIYSAPVFYNPSMEKNRTLSVLLLKTYGSGLTVCEPLSGTGIRGIRYAIESNAVGRLILNDISKEAVELIKKNLELNGVEGEVYNEDANVLLHKLRNTCDVVDIDPFGSPAPFLHAAFRALRDEGLICVTATDTAVLVGRYPRKCFRRYNSVIRRTPFYIELGLRNLVGYVARVAASEDFSIQPVFSYWENHYFRTCALATRGAREADDSLNNLGYIWYLKKRRKIVQTLDEHSSGPLWIGPLGDPLVVHKMSQYGVYSVFLQTLEMEYSIQAPWYFRLPEFAVDGKSPTLEKTLELLRRGGIYATRTHMSYDGFKAEANYDEIARILSI.

Residues 4–350 (ILNKEGAVEF…ANYDEIARIL (347 aa)) enclose the Trm1 methyltransferase domain. Residues Arg39, Arg65, Asp83, Asp109, and Ala110 each contribute to the S-adenosyl-L-methionine site.

The protein belongs to the class I-like SAM-binding methyltransferase superfamily. Trm1 family.

It carries out the reaction guanosine(26) in tRNA + 2 S-adenosyl-L-methionine = N(2)-dimethylguanosine(26) in tRNA + 2 S-adenosyl-L-homocysteine + 2 H(+). Dimethylates a single guanine residue at position 26 of a number of tRNAs using S-adenosyl-L-methionine as donor of the methyl groups. The sequence is that of tRNA (guanine(26)-N(2))-dimethyltransferase from Pyrobaculum islandicum (strain DSM 4184 / JCM 9189 / GEO3).